The primary structure comprises 127 residues: Probable 4-amino-4-deoxy-L-arabinose-phosphoundecaprenol flippase subunit ArnF (127 aa).

A helical membrane pass occupies residues 1-21; sequence MMGYFWALMSVLLVSGAQLMM. The Periplasmic segment spans residues 22 to 48; that stretch reads KWAMVSLPPVGQTDALMSAFMSVTPGA. A helical membrane pass occupies residues 49–69; it reads VALVIGLFAYVFSMGCWYMAL. Residues 70 to 77 are Cytoplasmic-facing; the sequence is RRIALSKA. The chain crosses the membrane as a helical span at residues 78-98; the sequence is YPLLSLSYVLVWAAAIGLPWL. Topologically, residues 99-101 are periplasmic; it reads HEP. Residues 102 to 122 form a helical membrane-spanning segment; the sequence is FSVGKLAGVSVIFVGLLLVCL. At 123–127 the chain is on the cytoplasmic side; the sequence is PDKKS.

This sequence belongs to the ArnF family. As to quaternary structure, heterodimer of ArnE and ArnF.

The protein resides in the cell inner membrane. It functions in the pathway bacterial outer membrane biogenesis; lipopolysaccharide biosynthesis. Translocates 4-amino-4-deoxy-L-arabinose-phosphoundecaprenol (alpha-L-Ara4N-phosphoundecaprenol) from the cytoplasmic to the periplasmic side of the inner membrane. The sequence is that of Probable 4-amino-4-deoxy-L-arabinose-phosphoundecaprenol flippase subunit ArnF from Enterobacter sp. (strain 638).